The primary structure comprises 369 residues: Peptide chain release factor 2 (369 aa).

Gln-249 carries the N5-methylglutamine modification.

It belongs to the prokaryotic/mitochondrial release factor family. Methylated by PrmC. Methylation increases the termination efficiency of RF2.

Its subcellular location is the cytoplasm. In terms of biological role, peptide chain release factor 2 directs the termination of translation in response to the peptide chain termination codons UGA and UAA. In Thermosipho africanus (strain TCF52B), this protein is Peptide chain release factor 2.